The primary structure comprises 273 residues: NH(3)-dependent NAD(+) synthetase (273 aa).

ATP is bound at residue 47–54; the sequence is GISGGQDS. Residue aspartate 53 participates in Mg(2+) binding. Arginine 139 provides a ligand contact to deamido-NAD(+). Threonine 159 lines the ATP pocket. Residue glutamate 164 coordinates Mg(2+). Deamido-NAD(+)-binding residues include lysine 172 and aspartate 179. Residues lysine 188 and threonine 210 each contribute to the ATP site. 259-260 is a deamido-NAD(+) binding site; sequence HK.

The protein belongs to the NAD synthetase family. In terms of assembly, homodimer.

The enzyme catalyses deamido-NAD(+) + NH4(+) + ATP = AMP + diphosphate + NAD(+) + H(+). Its pathway is cofactor biosynthesis; NAD(+) biosynthesis; NAD(+) from deamido-NAD(+) (ammonia route): step 1/1. Functionally, catalyzes the ATP-dependent amidation of deamido-NAD to form NAD. Uses ammonia as a nitrogen source. This Staphylococcus aureus (strain N315) protein is NH(3)-dependent NAD(+) synthetase.